Reading from the N-terminus, the 235-residue chain is Attacin-E (235 aa).

The signal sequence occupies residues 1 to 19; sequence MFGKIVFLLLVALCAGVQS. Residues 20–47 constitute a propeptide that is removed on maturation; the sequence is RYLIVSEPVYYIEHYEEPELLASSRVRR.

Belongs to the attacin/sarcotoxin-2 family. Attacin F appears to be derived by proteolytic digestion of attacin E.

The protein localises to the secreted. Functionally, hemolymph antibacterial protein. This Hyalophora cecropia (Cecropia moth) protein is Attacin-E.